Here is a 625-residue protein sequence, read N- to C-terminus: E3 ubiquitin-protein ligase synoviolin (625 aa).

Residues 1-4 (MVRA) are Cytoplasmic-facing. A helical transmembrane segment spans residues 5–25 (ALVTATSLALTGAVVAHAYFL). The Lumenal portion of the chain corresponds to 26–40 (KHQFYPTVVYLTKSS). The chain crosses the membrane as a helical span at residues 41-61 (PSMAVLYIQAFVLVFLLGKLM). The Cytoplasmic portion of the chain corresponds to 62-98 (RKVFFGQLRAAEMEHLIERSWYAVTETCLAFTVFRDD). Residues 99–119 (FSPRFVALFTLLLFLKCFHWL) traverse the membrane as a helical segment. At 120 to 135 (AEDRVDFMERSPNISW) the chain is on the lumenal side. The chain crosses the membrane as a helical span at residues 136–156 (VFHFRVLSLMVLLGVMDFLFV). Topologically, residues 157–169 (NHACHSIITRGAS) are cytoplasmic. Residues 170–190 (VQLVFGFEYAILMTMVLTTFI) form a helical membrane-spanning segment. At 191 to 212 (KYTLHTIDLQSENPWDNKAVYM) the chain is on the lumenal side. A helical transmembrane segment spans residues 213–235 (LYTELFTGFIKVLLYMAFMTIMI). The interval 236 to 270 (KVHTFPLFAIRPMYLAMRQFKKAVTDAIMSRRAIR) is interaction with p53/TP53. The Cytoplasmic segment spans residues 236–625 (KVHTFPLFAI…GNLLKLASVN (390 aa)). 8 residues coordinate Zn(2+): Cys-291, Cys-294, Cys-307, His-309, His-312, Cys-315, Cys-326, and Cys-329. The RING-type; atypical zinc-finger motif lies at 291-330 (CIICREEMVTGAKKLPCNHIFHSSCLRSWFQRQQTCPTCR). Disordered stretches follow at residues 337–361 (SQPN…NAPI), 390–434 (PPPA…SAAP), 462–487 (FMSS…LEQE), and 523–625 (LSPP…ASVN). The segment covering 342–361 (TPAPPAAQAPAPPAPANAPI) has biased composition (pro residues). Residues 423-434 (AQSTAEAASAAP) are compositionally biased toward low complexity. Positions 462 to 471 (FMSSMPPPPS) are enriched in pro residues. Positions 523-564 (LSPPRSETNTGETSESANVESSPSTANTETAGQEIQSQSGES) are enriched in polar residues.

It belongs to the HRD1 family. In terms of assembly, homodimer.

It is found in the endoplasmic reticulum membrane. The enzyme catalyses S-ubiquitinyl-[E2 ubiquitin-conjugating enzyme]-L-cysteine + [acceptor protein]-L-lysine = [E2 ubiquitin-conjugating enzyme]-L-cysteine + N(6)-ubiquitinyl-[acceptor protein]-L-lysine.. The protein operates within protein modification; protein ubiquitination. In terms of biological role, E3 ubiquitin-protein ligase which accepts ubiquitin specifically from endoplasmic reticulum-associated UBC7 E2 ligase and transfers it to substrates, promoting their degradation. Component of the endoplasmic reticulum quality control (ERQC) system also called ER-associated degradation (ERAD) involved in ubiquitin-dependent degradation of misfolded endoplasmic reticulum proteins. Also promotes the degradation of normal but naturally short-lived proteins. Protects cells from ER stress-induced apoptosis. Sequesters p53 in the cytoplasm and promotes its degradation, thereby negatively regulating its biological function in transcription, cell cycle regulation and apoptosis. The polypeptide is E3 ubiquitin-protein ligase synoviolin (syvn1) (Danio rerio (Zebrafish)).